The sequence spans 506 residues: MAAMMASITSELLFFLPFILLALLTFYTTTVAKCHGGHWWRGGTTPAKRKRMNLPPGAAGWPLVGETFGYLRAHPATSVGRFMEQHIARYGKIYRSSLFGERTVVSADAGLNRYILQNEGRLFECSYPRSIGGILGKWSMLVLVGDPHREMRAISLNFLSSVRLRAVLLPEVERHTLLVLRAWPPSSTFSAQHQAKKFTFNLMAKNIMSMDPGEEETERLRREYITFMKGVVSAPLNLPGTPYWKALKSRAAILGVIERKMEERVEKLSKEDASVEQDDLLGWALKQSNLSKEQILDLLLSLLFAGHETSSMALALAIFFLEGCPKAVQELREEHLGIARRQRLRGECKLSWEDYKEMVFTQCVINETLRLGNVVRFLHRKVIKDVHYKGYDIPSGWKILPVLAAVHLDSSLYEDPQRFNPWRWKSSGSSGGLAQSSSFMPYGGGTRLCAGSELAKLEMAVFLHHLVLNFRWELAEPDQAFVFPFVDFPKGLPIRVHRIAQDDEQE.

Residues 12-32 (LLFFLPFILLALLTFYTTTVA) traverse the membrane as a helical segment. Cys449 lines the heme pocket.

Belongs to the cytochrome P450 family. It depends on heme as a cofactor. Highly expressed in roots and leaf blades. Expressed in shoot apex, stems, leaf sheaths, inflorescences and flowers.

Its subcellular location is the membrane. The enzyme catalyses a C28-steroid + reduced [NADPH--hemoprotein reductase] + O2 = a (22S)-22-hydroxy C28-steroid + oxidized [NADPH--hemoprotein reductase] + H2O + H(+). It carries out the reaction campesterol + reduced [NADPH--hemoprotein reductase] + O2 = (22S)-22-hydroxycampesterol + oxidized [NADPH--hemoprotein reductase] + H2O + H(+). It catalyses the reaction campestanol + reduced [NADPH--hemoprotein reductase] + O2 = 6-deoxycathasterone + oxidized [NADPH--hemoprotein reductase] + H2O + H(+). Its pathway is plant hormone biosynthesis; brassinosteroid biosynthesis. In terms of biological role, catalyzes the C22-alpha-hydroxylation step in brassinosteroid biosynthesis, which is the rate-limiting step in this biosynthetic pathway. Catalyzes the conversion of campesterol (CR) to (22S)-22-hydroxycampesterol (22-OHCR, 22-hydroxyCR) and of campestanol (CN) to 6-deoxycathasterone (6-deoxoCT). Required for auxin responses involved in the regulation of epidermal cells length of the lamina joint. This Oryza sativa subsp. japonica (Rice) protein is Steroid (22S)-hydroxylase.